We begin with the raw amino-acid sequence, 211 residues long: FMN-dependent NADH:quinone oxidoreductase (211 aa).

FMN-binding positions include serine 10, 16–18, and 138–141; these read STS and TQGG.

It belongs to the azoreductase type 1 family. In terms of assembly, homodimer. FMN serves as cofactor.

The enzyme catalyses 2 a quinone + NADH + H(+) = 2 a 1,4-benzosemiquinone + NAD(+). It catalyses the reaction N,N-dimethyl-1,4-phenylenediamine + anthranilate + 2 NAD(+) = 2-(4-dimethylaminophenyl)diazenylbenzoate + 2 NADH + 2 H(+). Functionally, quinone reductase that provides resistance to thiol-specific stress caused by electrophilic quinones. Also exhibits azoreductase activity. Catalyzes the reductive cleavage of the azo bond in aromatic azo compounds to the corresponding amines. This is FMN-dependent NADH:quinone oxidoreductase from Frankia alni (strain DSM 45986 / CECT 9034 / ACN14a).